The following is a 92-amino-acid chain: C-C motif chemokine 3 (92 aa).

An N-terminal signal peptide occupies residues 1–23 (MKVSTAALAVLLCTMALWNEVFS). 2 cysteine pairs are disulfide-bonded: cysteine 34–cysteine 57 and cysteine 35–cysteine 73.

This sequence belongs to the intercrine beta (chemokine CC) family. In terms of assembly, self-associates. Also heterodimer of MIP-1-alpha(4-69) and MIP-1-beta(3-69). Interacts with CCR1.

It is found in the secreted. Functionally, monokine with inflammatory and chemokinetic properties. Binds to CCR1, CCR4 and CCR5. One of the major HIV-suppressive factors produced by CD8+ T-cells. Recombinant MIP-1-alpha induces a dose-dependent inhibition of different strains of HIV-1, HIV-2, and simian immunodeficiency virus (SIV). The polypeptide is C-C motif chemokine 3 (Ccl3) (Rattus norvegicus (Rat)).